The chain runs to 349 residues: Isopentenyl-diphosphate delta-isomerase (349 aa).

A substrate-binding site is contributed by 6-7 (RK). Residues 62 to 64 (AMT), serine 93, and asparagine 122 contribute to the FMN site. Glutamine 152 is a substrate binding site. Glutamate 153 provides a ligand contact to Mg(2+). FMN contacts are provided by residues lysine 184, threonine 214, 258–259 (GG), and 280–281 (AG).

The protein belongs to the IPP isomerase type 2 family. As to quaternary structure, homooctamer. Dimer of tetramers. The cofactor is FMN. It depends on NADPH as a cofactor. Mg(2+) serves as cofactor.

It localises to the cytoplasm. It carries out the reaction isopentenyl diphosphate = dimethylallyl diphosphate. Functionally, involved in the biosynthesis of isoprenoids. Catalyzes the 1,3-allylic rearrangement of the homoallylic substrate isopentenyl (IPP) to its allylic isomer, dimethylallyl diphosphate (DMAPP). This chain is Isopentenyl-diphosphate delta-isomerase, found in Bacillus thuringiensis subsp. konkukian (strain 97-27).